Consider the following 99-residue polypeptide: Aspartyl/glutamyl-tRNA(Asn/Gln) amidotransferase subunit C (99 aa).

Belongs to the GatC family. In terms of assembly, heterotrimer of A, B and C subunits.

The catalysed reaction is L-glutamyl-tRNA(Gln) + L-glutamine + ATP + H2O = L-glutaminyl-tRNA(Gln) + L-glutamate + ADP + phosphate + H(+). The enzyme catalyses L-aspartyl-tRNA(Asn) + L-glutamine + ATP + H2O = L-asparaginyl-tRNA(Asn) + L-glutamate + ADP + phosphate + 2 H(+). In terms of biological role, allows the formation of correctly charged Asn-tRNA(Asn) or Gln-tRNA(Gln) through the transamidation of misacylated Asp-tRNA(Asn) or Glu-tRNA(Gln) in organisms which lack either or both of asparaginyl-tRNA or glutaminyl-tRNA synthetases. The reaction takes place in the presence of glutamine and ATP through an activated phospho-Asp-tRNA(Asn) or phospho-Glu-tRNA(Gln). This is Aspartyl/glutamyl-tRNA(Asn/Gln) amidotransferase subunit C from Rhodococcus opacus (strain B4).